Here is a 200-residue protein sequence, read N- to C-terminus: Diadenylate cyclase (200 aa).

Residues isoleucine 5 to alanine 25 form a helical membrane-spanning segment. In terms of domain architecture, DAC spans asparagine 28–asparagine 185.

It belongs to the adenylate cyclase family. DacB/CdaS subfamily. In terms of assembly, probably oligomerizes.

Its subcellular location is the cell membrane. The enzyme catalyses 2 ATP = 3',3'-c-di-AMP + 2 diphosphate. Its function is as follows. Catalyzes the condensation of 2 ATP molecules into cyclic di-AMP (c-di-AMP), a second messenger used to regulate differing processes in different bacteria. The sequence is that of Diadenylate cyclase from Mycoplasma genitalium (strain ATCC 33530 / DSM 19775 / NCTC 10195 / G37) (Mycoplasmoides genitalium).